An 894-amino-acid chain; its full sequence is ABC-transporter-regulating transcription factor (894 aa).

A DNA-binding region (zn(2)-C6 fungal-type) is located at residues C71–C98. Positions N159–G174 are enriched in polar residues. The tract at residues N159–G219 is disordered. Residues S175–H189 are compositionally biased toward low complexity. Over residues S199–P210 the composition is skewed to polar residues. The chain crosses the membrane as a helical span at residues C649–L669. The segment at A724 to P797 is disordered. Basic and acidic residues predominate over residues A736 to D750. Polar residues-rich tracts occupy residues E751 to R761 and L771 to T792.

It is found in the nucleus. Its subcellular location is the membrane. Its function is as follows. Transcription factor that regulates expression of the genes related to resistance to azole compounds. This Aspergillus oryzae (strain ATCC 42149 / RIB 40) (Yellow koji mold) protein is ABC-transporter-regulating transcription factor.